We begin with the raw amino-acid sequence, 407 residues long: MAKSKFERNKPHVNVGTIGHVDHGKTTLTAALTRVCAEVFGGTAVAFDGIDNAPEERERGITISTSHVEYDSPTRHYAHVDCPGHADYVKNMITGAAQMDGAILVCGATDGPMPQTREHILLSRQVGVPYIVVFLNKSDLLADDCGGADSEEYAEMLELVEMELRDLLSEYDFPGDDTPIIPGSALMALKGEDDNEMGTTAVRKLVETLDTYIPDPERAIDGAFLMPIEDVFSIQGRGTVVTGRVERGIIKIQEEVEIVGIVDTTKTTCTGVEMFRKLLDEGRAGENCGILLRGTKREDVQRGQVLAKPGSITPHTQFEAEVYVLGKDEGGRHTPFFKGYRPQFYFRTTDVTGACSLPEGVEMVMPGDNIQMTVELIHPIAMDEGLRFAIREGGRTVGAGVVAKILK.

A tr-type G domain is found at 10-217 (KPHVNVGTIG…TLDTYIPDPE (208 aa)). The segment at 19–26 (GHVDHGKT) is G1. 19 to 26 (GHVDHGKT) contributes to the GTP binding site. Position 26 (T26) interacts with Mg(2+). The interval 60–64 (GITIS) is G2. Residues 81–84 (DCPG) are G3. Residues 81–85 (DCPGH) and 136–139 (NKSD) each bind GTP. The tract at residues 136–139 (NKSD) is G4. The interval 184–186 (SAL) is G5.

This sequence belongs to the TRAFAC class translation factor GTPase superfamily. Classic translation factor GTPase family. EF-Tu/EF-1A subfamily. Monomer.

Its subcellular location is the cytoplasm. The enzyme catalyses GTP + H2O = GDP + phosphate + H(+). In terms of biological role, GTP hydrolase that promotes the GTP-dependent binding of aminoacyl-tRNA to the A-site of ribosomes during protein biosynthesis. In Marinomonas sp. (strain MWYL1), this protein is Elongation factor Tu.